A 141-amino-acid chain; its full sequence is Hemoglobin subunit alpha-A (141 aa).

The 141-residue stretch at 1–141 (VLTEEDKSRV…VAKTLVSRYR (141 aa)) folds into the Globin domain. His-58 lines the O2 pocket. Position 87 (His-87) interacts with heme b.

It belongs to the globin family. In terms of assembly, heterotetramer of two alpha chains and two beta chains. In terms of tissue distribution, red blood cells.

Its function is as follows. Involved in oxygen transport from the lung to the various peripheral tissues. The chain is Hemoglobin subunit alpha-A from Drymarchon melanurus erebennus (Texas indigo snake).